Reading from the N-terminus, the 24-residue chain is Transaldolase (24 aa).

Belongs to the transaldolase family.

The protein localises to the cytoplasm. It catalyses the reaction D-sedoheptulose 7-phosphate + D-glyceraldehyde 3-phosphate = D-erythrose 4-phosphate + beta-D-fructose 6-phosphate. It functions in the pathway carbohydrate degradation; pentose phosphate pathway; D-glyceraldehyde 3-phosphate and beta-D-fructose 6-phosphate from D-ribose 5-phosphate and D-xylulose 5-phosphate (non-oxidative stage): step 2/3. Functionally, transaldolase is important for the balance of metabolites in the pentose-phosphate pathway. The protein is Transaldolase of Capsicum annuum var. annuum (Red pepper).